The chain runs to 354 residues: NADH-quinone oxidoreductase subunit H (354 aa).

A run of 8 helical transmembrane segments spans residues 25–45, 91–111, 126–146, 170–190, 205–225, 267–287, 290–310, and 330–350; these read LVRI…LILW, WIYL…WAVI, LLYA…AGWA, MGFA…SGIV, FLSW…ISGI, IVIS…PFGF, FVPG…VFIW, and IFIP…MSPL.

It belongs to the complex I subunit 1 family. In terms of assembly, NDH-1 is composed of 14 different subunits. Subunits NuoA, H, J, K, L, M, N constitute the membrane sector of the complex.

Its subcellular location is the cell inner membrane. The enzyme catalyses a quinone + NADH + 5 H(+)(in) = a quinol + NAD(+) + 4 H(+)(out). In terms of biological role, NDH-1 shuttles electrons from NADH, via FMN and iron-sulfur (Fe-S) centers, to quinones in the respiratory chain. The immediate electron acceptor for the enzyme in this species is believed to be ubiquinone. Couples the redox reaction to proton translocation (for every two electrons transferred, four hydrogen ions are translocated across the cytoplasmic membrane), and thus conserves the redox energy in a proton gradient. This subunit may bind ubiquinone. This Paraburkholderia phytofirmans (strain DSM 17436 / LMG 22146 / PsJN) (Burkholderia phytofirmans) protein is NADH-quinone oxidoreductase subunit H.